Consider the following 331-residue polypeptide: Tetraspanin-10 (331 aa).

The disordered stretch occupies residues 1–34 (MKEEECSPLLSQDTAGREHPLTRNSPPTANIPCP). At 1–76 (MKEEECSPLL…LSTGSNCVKY (76 aa)) the chain is on the cytoplasmic side. Residues 77 to 97 (LIFLSNFLFSLPSLLALAAGL) traverse the membrane as a helical segment. Over 98–120 (WGLTVKRSQGIGWGGPVPTDPML) the chain is Extracellular. Residues 121 to 141 (MLVLGGLVVSVVSLSGCLGAF) form a helical membrane-spanning segment. At 142–152 (CENSCLLHWYC) the chain is on the cytoplasmic side. The helical transmembrane segment at 153-173 (GAVLFCLALEALAGVLMVTLW) threads the bilayer. At 174–331 (KPLQDSLKYT…AAEDIEAGPL (158 aa)) the chain is on the extracellular side. 4 disulfides stabilise this stretch: Cys210/Cys277, Cys211/Cys241, Cys227/Cys235, and Cys242/Cys256. N-linked (GlcNAc...) asparagine glycosylation occurs at Asn226.

It belongs to the tetraspanin (TM4SF) family. Interacts with ADAM10.

The protein resides in the cell membrane. Its function is as follows. Part of TspanC8 subgroup, composed of 6 members that interact with the transmembrane metalloprotease ADAM10. This interaction is required for ADAM10 exit from the endoplasmic reticulum and for enzymatic maturation and trafficking to the cell surface as well as substrate specificity. Different TspanC8/ADAM10 complexes have distinct substrates. The polypeptide is Tetraspanin-10 (Tspan10) (Mus musculus (Mouse)).